Reading from the N-terminus, the 780-residue chain is Semaphorin-3G (780 aa).

Positions 1–22 (MDPSAWAICCLLGSLLFHVGIP) are cleaved as a signal peptide. In terms of domain architecture, Sema spans 32–519 (RLRLSYRDLL…SPLGVARLQL (488 aa)). Residue Asn44 is glycosylated (N-linked (GlcNAc...) asparagine). A disulfide bond links Cys105 and Cys116. A glycan (N-linked (GlcNAc...) asparagine) is linked at Asn127. Cystine bridges form between Cys134–Cys143, Cys270–Cys382, Cys294–Cys342, Cys522–Cys540, and Cys603–Cys655. Residues 569–671 (PAVQCLGQGQ…FSQTVVRFAL (103 aa)) form the Ig-like C2-type domain. Asn652 carries an N-linked (GlcNAc...) asparagine glycan.

The protein belongs to the semaphorin family. Highly expressed in lung and kidney. Weakly expressed in brain.

It localises to the secreted. In terms of biological role, has chemorepulsive activities for sympathetic axons. Ligand of NRP2. The chain is Semaphorin-3G (Sema3g) from Mus musculus (Mouse).